Here is a 355-residue protein sequence, read N- to C-terminus: Double-stranded RNA-binding protein 4 (355 aa).

2 DRBM domains span residues 4-73 (VYKG…SLTP) and 82-150 (AYKN…SIKN). Residues 149-188 (KNGNSNQTGSPTLPSERQEDVNSNVKSSPQEIHSQPSSKV) are compositionally biased toward polar residues. A disordered region spans residues 149 to 193 (KNGNSNQTGSPTLPSERQEDVNSNVKSSPQEIHSQPSSKVVMTPD).

As to quaternary structure, heterodimer with DRB1 or DRB5. Interacts with DCL4 and cauliflower mosaic virus (CaMV) transactivator/viroplasmin protein. Interaction with CaMV transactivator/viroplasmin protein inhibits RNA silencing ability of DRB4. Expressed in roots, leaf vasculature, shoot apical meristem (SAM) and developing anthers.

The protein localises to the nucleus. Double-stranded RNA-binding protein involved in RNA-mediated post-transcriptional gene silencing (PTGS). Functions in the trans-acting small interfering RNAs (ta-siRNAs) biogenesis by binding and assisting DICER-LIKE 4 (DCL4). Required for DCL4 activity. Required for the 21 nucleotide ta-siRNAs production of the TAS3 transcript in leaves but not in flowers. Plays an important role in silencing RNA of both DNA and RNA viruses. Involved with argonaute 7 (AGO7) and RDR6 in turnip crinkle virus (TCV) silencing. May not be directly involved in viral siRNA production. May stabilize the 21 nucleotide viral siRNAs and deliver them to the RISC complex. Targeted by the viral silencing suppressor (VSR) transactivator/viroplasmin (TAV) protein of the cauliflower mosaic virus (CaMV) that inactivates DRB4 function in RNA silencing. Probably not involved in the guide strand selection from RNA duplexes. Involved in leaf morphology through its function in ta-siRNA-mediated silencing. This is Double-stranded RNA-binding protein 4 (DBR4) from Arabidopsis thaliana (Mouse-ear cress).